Reading from the N-terminus, the 92-residue chain is CRISPR-associated endoribonuclease Cas2 (92 aa).

Asp-9 contacts Mg(2+).

This sequence belongs to the CRISPR-associated endoribonuclease Cas2 protein family. Homodimer, forms a heterotetramer with a Cas1 homodimer. Mg(2+) is required as a cofactor.

Its function is as follows. CRISPR (clustered regularly interspaced short palindromic repeat), is an adaptive immune system that provides protection against mobile genetic elements (viruses, transposable elements and conjugative plasmids). CRISPR clusters contain sequences complementary to antecedent mobile elements and target invading nucleic acids. CRISPR clusters are transcribed and processed into CRISPR RNA (crRNA). Functions as a ssRNA-specific endoribonuclease. Involved in the integration of spacer DNA into the CRISPR cassette. This chain is CRISPR-associated endoribonuclease Cas2, found in Aeropyrum pernix (strain ATCC 700893 / DSM 11879 / JCM 9820 / NBRC 100138 / K1).